Consider the following 342-residue polypeptide: Serine/threonine-protein kinase SAPK1 (342 aa).

In terms of domain architecture, Protein kinase spans 4–260 (YEVMRDIGSG…IPEIKNHPWF (257 aa)). Residues 10–18 (IGSGNFGVA) and Lys-33 each bind ATP. Asp-123 functions as the Proton acceptor in the catalytic mechanism. The C-terminal stretch occupies residues 253–342 (EIKNHPWFLK…ENSGDFVCAL (90 aa)).

The protein belongs to the protein kinase superfamily. Ser/Thr protein kinase family. In terms of processing, phosphorylated. In terms of tissue distribution, expressed in leaf blades, leaf sheaths and roots. Expressed in shoots and roots of young seedlings.

The catalysed reaction is L-seryl-[protein] + ATP = O-phospho-L-seryl-[protein] + ADP + H(+). The enzyme catalyses L-threonyl-[protein] + ATP = O-phospho-L-threonyl-[protein] + ADP + H(+). Its activity is regulated as follows. Activated by phosphorylation in response to hyperosmotic stress within 5 minutes. In terms of biological role, may play a role in signal transduction of hyperosmotic response. The sequence is that of Serine/threonine-protein kinase SAPK1 (SAPK1) from Oryza sativa subsp. japonica (Rice).